We begin with the raw amino-acid sequence, 481 residues long: Aspartyl/glutamyl-tRNA(Asn/Gln) amidotransferase subunit B (481 aa).

It belongs to the GatB/GatE family. GatB subfamily. In terms of assembly, heterotrimer of A, B and C subunits.

The enzyme catalyses L-glutamyl-tRNA(Gln) + L-glutamine + ATP + H2O = L-glutaminyl-tRNA(Gln) + L-glutamate + ADP + phosphate + H(+). It catalyses the reaction L-aspartyl-tRNA(Asn) + L-glutamine + ATP + H2O = L-asparaginyl-tRNA(Asn) + L-glutamate + ADP + phosphate + 2 H(+). Functionally, allows the formation of correctly charged Asn-tRNA(Asn) or Gln-tRNA(Gln) through the transamidation of misacylated Asp-tRNA(Asn) or Glu-tRNA(Gln) in organisms which lack either or both of asparaginyl-tRNA or glutaminyl-tRNA synthetases. The reaction takes place in the presence of glutamine and ATP through an activated phospho-Asp-tRNA(Asn) or phospho-Glu-tRNA(Gln). The protein is Aspartyl/glutamyl-tRNA(Asn/Gln) amidotransferase subunit B of Pseudomonas fluorescens (strain Pf0-1).